The sequence spans 205 residues: Protein MIS12 homolog (205 aa).

A coiled-coil region spans residues 108–205 (PYSEEDFQHL…EKESKRLKIS (98 aa)).

This sequence belongs to the mis12 family. As to quaternary structure, component of the MIS12 complex composed of MIS12, DSN1, NSL1 and PMF1. Also interacts with KNL1, CBX3, CBX5, NDC80 and ZWINT.

Its subcellular location is the chromosome. The protein localises to the centromere. It localises to the kinetochore. Functionally, part of the MIS12 complex which is required for normal chromosome alignment and segregation and for kinetochore formation during mitosis. Essential for proper kinetochore microtubule attachments. This is Protein MIS12 homolog from Homo sapiens (Human).